A 398-amino-acid polypeptide reads, in one-letter code: Elongation factor Tu (398 aa).

One can recognise a tr-type G domain in the interval 10-207; that stretch reads KPHVNIGTIG…TVDSYIPEPE (198 aa). Residues 19 to 26 are G1; the sequence is GHVDHGKT. Residue 19–26 participates in GTP binding; it reads GHVDHGKT. Residue Thr26 coordinates Mg(2+). The segment at 63-67 is G2; the sequence is GITIN. The tract at residues 84–87 is G3; the sequence is DAPG. Residues 84–88 and 139–142 each bind GTP; these read DAPGH and NKVD. Residues 139 to 142 are G4; it reads NKVD. Positions 177-179 are G5; it reads SAL.

The protein belongs to the TRAFAC class translation factor GTPase superfamily. Classic translation factor GTPase family. EF-Tu/EF-1A subfamily. In terms of assembly, monomer.

It is found in the cytoplasm. The catalysed reaction is GTP + H2O = GDP + phosphate + H(+). Its function is as follows. GTP hydrolase that promotes the GTP-dependent binding of aminoacyl-tRNA to the A-site of ribosomes during protein biosynthesis. In Streptococcus pyogenes serotype M1, this protein is Elongation factor Tu.